The chain runs to 329 residues: Mas-related G-protein coupled receptor member X2 (329 aa).

The Extracellular segment spans residues 1–33; that stretch reads MDPTTPAWGTESTTMNGNDQALPLLCGKETMIS. Residues 34 to 54 form a helical membrane-spanning segment; that stretch reads VFLILFIALVGLVGNAFVLWL. The Cytoplasmic portion of the chain corresponds to 55–63; the sequence is LGFRMRRNA. The helical transmembrane segment at 64 to 84 threads the bilayer; sequence FSVYVLSLAGADFLFLCFQMT. Residues 85-96 are Extracellular-facing; that stretch reads SCLAYLINFFGS. A helical transmembrane segment spans residues 97-116; it reads ISINIPSFFTVMTCAYLAGL. Residues 117–143 lie on the Cytoplasmic side of the membrane; sequence SMLSAISTERCLSVLWPIWYRCRRPRH. A helical transmembrane segment spans residues 144–164; sequence LSAVMCVLLWALSLLLSILEG. Over 165–183 the chain is Extracellular; the sequence is KFCGFLFSDDDPGWCQTFD. The helical transmembrane segment at 184 to 204 threads the bilayer; it reads FITAAWLMFLFVVLCGSSLAL. Topologically, residues 205-227 are cytoplasmic; sequence LVRILCGSRSLPLTRLYLTILLT. The helical transmembrane segment at 228–248 threads the bilayer; the sequence is VLIFLLCGLPFGIQWFLILWI. Over 249-263 the chain is Extracellular; sequence WKNSVVLFCHIHPIS. Residues 264-284 traverse the membrane as a helical segment; sequence VVLSSFNSSANPIIYFFVGSF. Over 285–329 the chain is Cytoplasmic; the sequence is RKQWRLRQPILKLALQRALQDTAEVDHSEGCFSQGTLEMSRSSLV.

The protein belongs to the G-protein coupled receptor 1 family. Mas subfamily.

Its subcellular location is the cell membrane. Functionally, mast cell-specific receptor for basic secretagogues, i.e. cationic amphiphilic drugs, as well as endo- or exogenous peptides, consisting of a basic head group and a hydrophobic core. Recognizes and binds small molecules containing a cyclized tetrahydroisoquinoline (THIQ), such as non-steroidal neuromuscular blocking drugs (NMBDs), including tubocurarine and atracurium. In response to these compounds, mediates pseudo-allergic reactions characterized by histamine release, inflammation and airway contraction. This Macaca mulatta (Rhesus macaque) protein is Mas-related G-protein coupled receptor member X2 (MRGPRX2).